Consider the following 526-residue polypeptide: GMP synthase [glutamine-hydrolyzing] (526 aa).

One can recognise a Glutamine amidotransferase type-1 domain in the interval 9–208 (RILILDFGSQ…LVNICGCKQL (200 aa)). Catalysis depends on C86, which acts as the Nucleophile. Catalysis depends on residues H182 and E184. Residues 209–401 (WTPGRIIEDA…LGLPYDMVYR (193 aa)) form the GMPS ATP-PPase domain. 236 to 242 (SGGVDSS) is a binding site for ATP.

In terms of assembly, homodimer.

The catalysed reaction is XMP + L-glutamine + ATP + H2O = GMP + L-glutamate + AMP + diphosphate + 2 H(+). It participates in purine metabolism; GMP biosynthesis; GMP from XMP (L-Gln route): step 1/1. In terms of biological role, catalyzes the synthesis of GMP from XMP. The chain is GMP synthase [glutamine-hydrolyzing] from Hahella chejuensis (strain KCTC 2396).